Consider the following 483-residue polypeptide: Probable cysteine protease ATG4 (483 aa).

Cys141 (nucleophile) is an active-site residue. Catalysis depends on residues Asp315 and His317.

This sequence belongs to the peptidase C54 family.

It is found in the cytoplasm. The protein localises to the nucleus. The protein resides in the preautophagosomal structure. The enzyme catalyses [protein]-C-terminal L-amino acid-glycyl-phosphatidylethanolamide + H2O = [protein]-C-terminal L-amino acid-glycine + a 1,2-diacyl-sn-glycero-3-phosphoethanolamine. In terms of biological role, cysteine protease that plays a key role in cytoplasm to vacuole transport (Cvt) and autophagy by mediating both proteolytic activation and delipidation of ATG8. Required for selective autophagic degradation of the nucleus (nucleophagy) as well as for mitophagy which contributes to regulate mitochondrial quantity and quality by eliminating the mitochondria to a basal level to fulfill cellular energy requirements and preventing excess ROS production. The protease activity is required for proteolytic activation of ATG8: cleaves the C-terminal amino acid of ATG8 to reveal a C-terminal glycine. ATG8 ubiquitin-like activity requires the exposure of the glycine at the C-terminus for its conjugation to phosphatidylethanolamine (PE) and its insertion to membranes, which is necessary for autophagy. The ATG8-PE conjugate mediates tethering between adjacent membranes and stimulates membrane hemifusion, leading to expansion of the autophagosomal membrane during autophagy. In addition to the protease activity, also catalyzes deconjugation of PE-conjugated forms of ATG8 during macroautophagy: ATG8 delipidation is required to release the protein from membranes, which facilitates multiple events during macroautophagy, and especially for efficient autophagosome biogenesis, the assembly of ATG9-containing tubulovesicular clusters into phagophores/autophagosomes, and for the disassembly of PAS-associated ATG components. ATG8 delipidation by ATG4 also recycles ATG8-PE generated on inappropriate membranes to maintain a reservoir of unlipidated ATG8 that is required for autophagosome formation at the PAS. The sequence is that of Probable cysteine protease ATG4 (ATG4) from Candida glabrata (strain ATCC 2001 / BCRC 20586 / JCM 3761 / NBRC 0622 / NRRL Y-65 / CBS 138) (Yeast).